A 278-amino-acid polypeptide reads, in one-letter code: Sulfate transport system permease protein CysT (278 aa).

7 helical membrane-spanning segments follow: residues 22–42 (FTWV…FLKS), 67–87 (FGLS…IAWV), 102–122 (FIDL…ATVY), 139–159 (IAFT…PFVV), 188–208 (FWRV…AQGF), 217–237 (SVVI…VLIF), and 246–266 (AGAT…LFVI). Positions 63 to 266 (YEVTFGLSLA…LFSLVILFVI (204 aa)) constitute an ABC transmembrane type-1 domain.

Belongs to the binding-protein-dependent transport system permease family. CysTW subfamily. As to quaternary structure, the complex is composed of two ATP-binding proteins (CysA), two transmembrane proteins (CysT and CysW) and a solute-binding protein (CysP).

It is found in the cell inner membrane. Functionally, part of the ABC transporter complex CysAWTP (TC 3.A.1.6.1) involved in sulfate/thiosulfate import. Probably responsible for the translocation of the substrate across the membrane. The chain is Sulfate transport system permease protein CysT (cysT) from Synechococcus elongatus (strain ATCC 33912 / PCC 7942 / FACHB-805) (Anacystis nidulans R2).